A 38-amino-acid chain; its full sequence is Potassium channel toxin alpha-KTx 3.17 (38 aa).

3 disulfide bridges follow: cysteine 8-cysteine 28, cysteine 14-cysteine 33, and cysteine 18-cysteine 35.

It belongs to the short scorpion toxin superfamily. Potassium channel inhibitor family. Alpha-KTx 03 subfamily. In terms of tissue distribution, expressed by the venom gland.

It localises to the secreted. Its function is as follows. Completely inhibits the (125)I-kaliotoxin binding on rat brain synaptosomes with high-affinity (IC(50)=0.1 nM). Is a potent Kv1.3/KCNA3 ligand. The protein is Potassium channel toxin alpha-KTx 3.17 of Buthus paris (Scorpion).